The sequence spans 58 residues: Large ribosomal subunit protein uL30 (58 aa).

Belongs to the universal ribosomal protein uL30 family. As to quaternary structure, part of the 50S ribosomal subunit.

The chain is Large ribosomal subunit protein uL30 from Trichlorobacter lovleyi (strain ATCC BAA-1151 / DSM 17278 / SZ) (Geobacter lovleyi).